A 163-amino-acid polypeptide reads, in one-letter code: MIRIGQGFDVHRFAGKGEGFRLGGVAVPYHKRLEAHSDGDVLLHAITDGLLGACGMGDIGRHFPDDDPRWRDADSIGLLASTLRLAAEAGWVPVNVDGTVIAQAPKLAPYIGAMRQATADAMELSPGAVNVKATTSERLGFTGRGEGIAAMAVVLVESAPGRG.

The a divalent metal cation site is built by Asp-9 and His-11. Residues 9–11 and 36–37 each bind 4-CDP-2-C-methyl-D-erythritol 2-phosphate; these read DVH and HS. His-44 lines the a divalent metal cation pocket. Residues 58–60, 63–67, 134–137, Phe-141, and Arg-144 each bind 4-CDP-2-C-methyl-D-erythritol 2-phosphate; these read DIG, FPDDD, and TTSE.

This sequence belongs to the IspF family. Homotrimer. A divalent metal cation is required as a cofactor.

It catalyses the reaction 4-CDP-2-C-methyl-D-erythritol 2-phosphate = 2-C-methyl-D-erythritol 2,4-cyclic diphosphate + CMP. It functions in the pathway isoprenoid biosynthesis; isopentenyl diphosphate biosynthesis via DXP pathway; isopentenyl diphosphate from 1-deoxy-D-xylulose 5-phosphate: step 4/6. Involved in the biosynthesis of isopentenyl diphosphate (IPP) and dimethylallyl diphosphate (DMAPP), two major building blocks of isoprenoid compounds. Catalyzes the conversion of 4-diphosphocytidyl-2-C-methyl-D-erythritol 2-phosphate (CDP-ME2P) to 2-C-methyl-D-erythritol 2,4-cyclodiphosphate (ME-CPP) with a corresponding release of cytidine 5-monophosphate (CMP). This Halorhodospira halophila (strain DSM 244 / SL1) (Ectothiorhodospira halophila (strain DSM 244 / SL1)) protein is 2-C-methyl-D-erythritol 2,4-cyclodiphosphate synthase.